Reading from the N-terminus, the 481-residue chain is Abl interactor 1 (481 aa).

A2 is modified (N-acetylalanine). The required for binding to WASF1 stretch occupies residues 18–79 (ALIESYQNLT…NNVLQLLDIQ (62 aa)). The 63-residue stretch at 45 to 107 (KALEETKAYT…DIHKEKVARR (63 aa)) folds into the t-SNARE coiled-coil homology domain. At Y53 the chain carries Phosphotyrosine. The disordered stretch occupies residues 158-285 (AKHGNNQPAR…PGAAPGSQYG (128 aa)). Over residues 161–175 (GNNQPARTGTLSRTN) the composition is skewed to polar residues. Phosphothreonine occurs at positions 174 and 178. Residues S183 and S187 each carry the phosphoserine modification. At Y213 the chain carries Phosphotyrosine. T215 bears the Phosphothreonine mark. Phosphoserine occurs at positions 216, 222, and 225. The segment covering 222-235 (SQHSPGRTASLNQR) has biased composition (polar residues). Composition is skewed to low complexity over residues 248–258 (SRENSGSSSIG) and 272–282 (GPAAPGAAPGS). Residues S292 and S296 each carry the phosphoserine modification. 2 disordered regions span residues 318 to 348 (AQPHVNGGPLYSQNSISVAPPPPPMPQLTPQ) and 361 to 392 (NIADSPTPPPPPPPDDIPMFDDSPPPPPPPPV). Composition is skewed to pro residues over residues 366 to 376 (PTPPPPPPPDD) and 383 to 392 (SPPPPPPPPV). Residues 419–478 (NYIEKVVAIYDYTKDKDDELSFKEGAIIYVIKKNDDGWFEGVCNRVTGLFPGNYVESIMH) enclose the SH3 domain. Y428 is modified (phosphotyrosine). S439 carries the phosphoserine modification. Residue T480 is modified to Phosphothreonine.

It belongs to the ABI family. Interacts with ENAH, Abelson murine leukemia virus V-ABL, ABL1, STX1A, SNAP25, VAMP2, and through its N-terminus with WASF1. Part of a complex consisting of ABI1, STX1A and SNAP25. Part of a complex consisting of ABI1, EPS8 and SOS1. Interacts with EPS8, SOS1, SOS2, GRB2, SPTA1, and the first SH3 domain of NCK1. Component of the WAVE2 complex composed of ABI1, CYFIP1/SRA1, NCKAP1/NAP1 (NCKAP1l/HEM1 in hematopoietic cells) and WASF2/WAVE2. Interacts (via SH3 domain) with SHANK2 and SHANK3, but not SHANK1; the interaction is direct. Interacts with the heterodimer MYC:MAX; the interaction may enhance MYC:MAX transcriptional activity. Interacts with FNBP1L (via the SH3 domain), WASF2, and CDC42, but only in the presence of FNBP1L. Post-translationally, phosphorylated on tyrosine residues after serum stimulation or induction by v-Abl. Seems to be phosphorylated at Tyr-53 by ABL1, required for nuclear but not for synaptic localization. As to expression, widely expressed with highest levels in bone marrow, spleen, brain, testes, and embryonic brain. In adult brain prominently expressed in the neocortex, hippocampus and dentate gyrus.

Its subcellular location is the cytoplasm. The protein localises to the nucleus. It localises to the cell projection. It is found in the lamellipodium. The protein resides in the filopodium. Its subcellular location is the growth cone. The protein localises to the postsynaptic density. It localises to the cytoskeleton. In terms of biological role, may act in negative regulation of cell growth and transformation by interacting with nonreceptor tyrosine kinases ABL1 and/or ABL2. In vitro, at least isoform 2 and isoform 4 suppress the transforming activity of Abelson murine leukemia virus (v-Abl) after overexpression in fibroblasts. May play a role in regulation EGF-induced Erk pathway activation. Involved in cytoskeletal reorganization and EGFR signaling. Together with EPS8 participates in transduction of signals from Ras to Rac. In vitro, a trimeric complex of ABI1, EPS8 and SOS1 exhibits Rac specific guanine nucleotide exchange factor (GEF) activity and ABI1 seems to act as an adapter in the complex. Regulates ABL1/c-Abl-mediated phosphorylation of ENAH. Recruits WASF1 to lamellipodia and there seems to regulate WASF1 protein level. In brain, seems to regulate the dendritic outgrowth and branching as well as to determine the shape and number of synaptic contacts of developing neurons. The sequence is that of Abl interactor 1 from Mus musculus (Mouse).